The primary structure comprises 352 residues: Cell division protein ZipA (352 aa).

The Periplasmic portion of the chain corresponds to 1–6; it reads MKDLQL. A helical membrane pass occupies residues 7 to 27; it reads VLFVLGAIAIIAVLVHGFWSI. The Cytoplasmic portion of the chain corresponds to 28 to 352; the sequence is RKQQPKSMKQ…KDYLRRLNAA (325 aa). 2 disordered regions span residues 78–120 and 138–160; these read KPVL…HVEP and PAPT…TSTA. A compositionally biased stretch (polar residues) spans 83–105; it reads TNLSQKPHSGTTKLTDTPLQDSL. Positions 111 to 120 are enriched in basic and acidic residues; that stretch reads HKTEPEHVEP. Residues 141-160 are compositionally biased toward polar residues; the sequence is TASTSMNTPKKIFNPSTSTA.

This sequence belongs to the ZipA family. In terms of assembly, interacts with FtsZ via their C-terminal domains.

The protein localises to the cell inner membrane. In terms of biological role, essential cell division protein that stabilizes the FtsZ protofilaments by cross-linking them and that serves as a cytoplasmic membrane anchor for the Z ring. Also required for the recruitment to the septal ring of downstream cell division proteins. The sequence is that of Cell division protein ZipA from Shewanella frigidimarina (strain NCIMB 400).